Consider the following 137-residue polypeptide: Basic phospholipase A2 homolog Ts-R6 (137 aa).

A signal peptide spans 1 to 16 (MRTLWIMAVLLLGVEG). Cystine bridges form between cysteine 42-cysteine 130, cysteine 44-cysteine 60, cysteine 59-cysteine 110, cysteine 65-cysteine 137, cysteine 66-cysteine 103, cysteine 73-cysteine 97, and cysteine 91-cysteine 101.

As to expression, expressed by the venom gland.

It is found in the secreted. Snake venom phospholipase A2 homolog that induces local edema a few hours after injection (5-10 ug) in the hind paw and shows weak anticoagulant and myotoxic activities. This chain is Basic phospholipase A2 homolog Ts-R6, found in Trimeresurus stejnegeri (Chinese green tree viper).